Here is a 427-residue protein sequence, read N- to C-terminus: Capsid vertex protein (427 aa).

It belongs to the Tevenvirinae capsid vertex family. Homopentamer. Interacts with the portal protein. Interacts with the major capsid protein that forms hexamers. Proteolytic cleavage at the N-terminus by the prohead core protein protease gives rise to the mature capsid vertex protein.

The protein resides in the virion. Functionally, capsid protein that self-associates to form pentons, building the capsid in association with hexamers of the major capsid protein and one dodecamer of the portal protein. The capsid vertex protein self-associates to form 11 pentons, building the T=13 laevo capsid in association with 160 hexamers of the major capsid protein. This Escherichia coli O157:H7 (Bacteriophage AR1) protein is Capsid vertex protein.